Consider the following 118-residue polypeptide: Large ribosomal subunit protein bL19 (118 aa).

Belongs to the bacterial ribosomal protein bL19 family.

Functionally, this protein is located at the 30S-50S ribosomal subunit interface and may play a role in the structure and function of the aminoacyl-tRNA binding site. In Parafrankia sp. (strain EAN1pec), this protein is Large ribosomal subunit protein bL19.